The primary structure comprises 245 residues: 1-(5-phosphoribosyl)-5-[(5-phosphoribosylamino)methylideneamino] imidazole-4-carboxamide isomerase (245 aa).

Aspartate 7 (proton acceptor) is an active-site residue. The Proton donor role is filled by aspartate 129.

The protein belongs to the HisA/HisF family.

It localises to the cytoplasm. The enzyme catalyses 1-(5-phospho-beta-D-ribosyl)-5-[(5-phospho-beta-D-ribosylamino)methylideneamino]imidazole-4-carboxamide = 5-[(5-phospho-1-deoxy-D-ribulos-1-ylimino)methylamino]-1-(5-phospho-beta-D-ribosyl)imidazole-4-carboxamide. Its pathway is amino-acid biosynthesis; L-histidine biosynthesis; L-histidine from 5-phospho-alpha-D-ribose 1-diphosphate: step 4/9. The polypeptide is 1-(5-phosphoribosyl)-5-[(5-phosphoribosylamino)methylideneamino] imidazole-4-carboxamide isomerase (Salmonella choleraesuis (strain SC-B67)).